The following is a 65-amino-acid chain: Precursor peptide TigB (65 aa).

6 TIGSVS motif repeats span residues 16-21, 23-28, 33-38, 40-45, 47-52, and 54-59; these read TIGSVS. 6 positions are modified to methylcyclopropylglycine: isoleucine 17, isoleucine 24, isoleucine 34, isoleucine 41, isoleucine 48, and isoleucine 55.

Post-translationally, is subject to maturation by TigE, that catalyzes the formation of methylcyclopropylglycine (mCPG) residues from isoleucine residues residing in the repeating TIGSVS motifs.

Functionally, precursor peptide which undergoes post-translational modifications by tailoring enzymes, leading to the mature natural product. This is Precursor peptide TigB from Paramaledivibacter caminithermalis (strain DSM 15212 / CIP 107654 / DViRD3) (Clostridium caminithermale).